The primary structure comprises 74 residues: Translation initiation factor IF-1 (74 aa).

Residues 1 to 72 (MSKEDAIEME…NKGRITYRLK (72 aa)) enclose the S1-like domain.

Belongs to the IF-1 family. In terms of assembly, component of the 30S ribosomal translation pre-initiation complex which assembles on the 30S ribosome in the order IF-2 and IF-3, IF-1 and N-formylmethionyl-tRNA(fMet); mRNA recruitment can occur at any time during PIC assembly.

Its subcellular location is the cytoplasm. In terms of biological role, one of the essential components for the initiation of protein synthesis. Stabilizes the binding of IF-2 and IF-3 on the 30S subunit to which N-formylmethionyl-tRNA(fMet) subsequently binds. Helps modulate mRNA selection, yielding the 30S pre-initiation complex (PIC). Upon addition of the 50S ribosomal subunit IF-1, IF-2 and IF-3 are released leaving the mature 70S translation initiation complex. This Synechococcus sp. (strain JA-2-3B'a(2-13)) (Cyanobacteria bacterium Yellowstone B-Prime) protein is Translation initiation factor IF-1.